We begin with the raw amino-acid sequence, 393 residues long: Formate-dependent phosphoribosylglycinamide formyltransferase (393 aa).

N(1)-(5-phospho-beta-D-ribosyl)glycinamide-binding positions include 22–23 and Glu-82; that span reads EL. ATP-binding positions include Arg-114, Lys-155, 160–165, 195–198, and Glu-203; these read SSGKGQ and EGFI. The ATP-grasp domain occupies 119–308; sequence RLAAEELDLP…QFALHARAIL (190 aa). Glu-267 and Glu-279 together coordinate Mg(2+). Residues Asp-286, Lys-356, and 363–364 contribute to the N(1)-(5-phospho-beta-D-ribosyl)glycinamide site; that span reads RR.

It belongs to the PurK/PurT family. In terms of assembly, homodimer.

It carries out the reaction N(1)-(5-phospho-beta-D-ribosyl)glycinamide + formate + ATP = N(2)-formyl-N(1)-(5-phospho-beta-D-ribosyl)glycinamide + ADP + phosphate + H(+). It participates in purine metabolism; IMP biosynthesis via de novo pathway; N(2)-formyl-N(1)-(5-phospho-D-ribosyl)glycinamide from N(1)-(5-phospho-D-ribosyl)glycinamide (formate route): step 1/1. Functionally, involved in the de novo purine biosynthesis. Catalyzes the transfer of formate to 5-phospho-ribosyl-glycinamide (GAR), producing 5-phospho-ribosyl-N-formylglycinamide (FGAR). Formate is provided by PurU via hydrolysis of 10-formyl-tetrahydrofolate. The sequence is that of Formate-dependent phosphoribosylglycinamide formyltransferase from Pseudomonas entomophila (strain L48).